A 170-amino-acid chain; its full sequence is MSTQDRPSGSGQDPQDRLTHIDEAGAARMVDVSGKDVTARTARASGRVLVAPRVVELLRGEGVPKGDALATARIAGIMGAKRTPDLIPLCHPLSVSGVKLDLSVADDAVEITATVRTTDRTGVEMEALTAVSVAALTVVDMVKAVDKGAVITDVRVEQKTGGKSGDWTRS.

Substrate is bound by residues 89 to 91 (LCH) and 125 to 126 (ME). Asp-140 is an active-site residue.

This sequence belongs to the MoaC family. In terms of assembly, homohexamer; trimer of dimers.

It catalyses the reaction (8S)-3',8-cyclo-7,8-dihydroguanosine 5'-triphosphate = cyclic pyranopterin phosphate + diphosphate. It functions in the pathway cofactor biosynthesis; molybdopterin biosynthesis. In terms of biological role, catalyzes the conversion of (8S)-3',8-cyclo-7,8-dihydroguanosine 5'-triphosphate to cyclic pyranopterin monophosphate (cPMP). This Streptomyces coelicolor (strain ATCC BAA-471 / A3(2) / M145) protein is Cyclic pyranopterin monophosphate synthase.